The following is a 530-amino-acid chain: CTP synthase (530 aa).

An amidoligase domain region spans residues 1 to 267 (MTKYVFVTGG…DDFVLNHFKM (267 aa)). A CTP-binding site is contributed by S13. Position 13 (S13) interacts with UTP. 14 to 19 (SLGKGI) contributes to the ATP binding site. Y54 provides a ligand contact to L-glutamine. D71 is a binding site for ATP. D71 and E141 together coordinate Mg(2+). CTP contacts are provided by residues 148–150 (DIE), 188–193 (KTKPTQ), and K224. Residues 188–193 (KTKPTQ) and K224 each bind UTP. Position 240–242 (240–242 (RDA)) interacts with ATP. The region spanning 292–530 (KIALVGKYIE…LFKAFIGATM (239 aa)) is the Glutamine amidotransferase type-1 domain. G354 is a binding site for L-glutamine. Residue C381 is the Nucleophile; for glutamine hydrolysis of the active site. L-glutamine-binding positions include 382–385 (LGMQ), E405, and R463. Residues H508 and E510 contribute to the active site.

This sequence belongs to the CTP synthase family. In terms of assembly, homotetramer.

The enzyme catalyses UTP + L-glutamine + ATP + H2O = CTP + L-glutamate + ADP + phosphate + 2 H(+). It catalyses the reaction L-glutamine + H2O = L-glutamate + NH4(+). It carries out the reaction UTP + NH4(+) + ATP = CTP + ADP + phosphate + 2 H(+). The protein operates within pyrimidine metabolism; CTP biosynthesis via de novo pathway; CTP from UDP: step 2/2. With respect to regulation, allosterically activated by GTP, when glutamine is the substrate; GTP has no effect on the reaction when ammonia is the substrate. The allosteric effector GTP functions by stabilizing the protein conformation that binds the tetrahedral intermediate(s) formed during glutamine hydrolysis. Inhibited by the product CTP, via allosteric rather than competitive inhibition. In terms of biological role, catalyzes the ATP-dependent amination of UTP to CTP with either L-glutamine or ammonia as the source of nitrogen. Regulates intracellular CTP levels through interactions with the four ribonucleotide triphosphates. This chain is CTP synthase, found in Latilactobacillus sakei subsp. sakei (strain 23K) (Lactobacillus sakei subsp. sakei).